A 124-amino-acid polypeptide reads, in one-letter code: Protein BEX3 (124 aa).

The tract at residues 1 to 56 (MANVHQENEEMEQPLQNGQEDRPVGGGEGHQPAANNNNNNHNHNHNHHRRGQARRL) is disordered. A compositionally biased stretch (basic residues) spans 42–53 (NHNHNHHRRGQA). Residues 81-106 (EMFMEEMREIRRKLRELQLRNCLRIL) are interaction with p75NTR/NGFR. The segment at 81-124 (EMFMEEMREIRRKLRELQLRNCLRILMGELSNHHDHHDEFCLMP) is interaction with 14-3-3 epsilon. A Nuclear export signal motif is present at residues 90–100 (IRRKLRELQLR). Positions 113–117 (HHDHH) are his cluster. Residue C121 coordinates Zn(2+).

It belongs to the BEX family. In terms of assembly, self-associates. Binds to the DEATH domain of p75NTR/NGFR. Interacts with 14-3-3 epsilon (YWHAE). Interacts with DIABLO/SMAC. Ubiquitinated. Degraded by the proteasome. Widely expressed.

The protein resides in the nucleus. It localises to the cytoplasm. It is found in the cytosol. In terms of biological role, may be a signaling adapter molecule involved in NGFR/p75NTR-mediated apoptosis induced by NGF. Plays a role in zinc-triggered neuronal death. In absence of reductive stress, acts as a pseudosubstrate for the CRL2(FEM1B) complex: associates with FEM1B via zinc, thereby preventing association between FEM1B and its substrates. This Mus musculus (Mouse) protein is Protein BEX3.